We begin with the raw amino-acid sequence, 564 residues long: Bicarbonate transporter BicA (564 aa).

The Cytoplasmic portion of the chain corresponds to 1–11 (MQITNKIHFRN). A helical transmembrane segment spans residues 12–37 (LQGDLFGGVTAAVIALPMALAFGIAS). Topologically, residues 38-40 (GAG) are periplasmic. Residues 41–58 (ATAGLWGAVIVGFFAALF) form a helical membrane-spanning segment. Over 59 to 70 (GGTPTLISEPTG) the chain is Cytoplasmic. T69 contributes to the hydrogencarbonate binding site. A helical transmembrane segment spans residues 71 to 86 (PMTVVQTAVIASLVAA). Residues 87–90 (DPDN) lie on the Periplasmic side of the membrane. A helical transmembrane segment spans residues 91–112 (GLAMAFTVVMMAGLFQIAFGLL). The Cytoplasmic segment spans residues 113 to 122 (KLGKYVTMMP). Residues 123-145 (YTVISGFMSGIGIILVILQLAPF) traverse the membrane as a helical segment. Residues 146 to 170 (LGQASPKGGVIGTLQALPNLVSNVR) lie on the Periplasmic side of the membrane. A helical membrane pass occupies residues 171 to 185 (PVETLLALMTVGIIW). The Cytoplasmic portion of the chain corresponds to 186–196 (FMPSRWKKFAP). The chain crosses the membrane as a helical span at residues 197-211 (PQLVALVLGTIISIT). The Periplasmic segment spans residues 212-240 (LFGDLDIRRIGEIQAGLPALQLPVFQADQ). A helical transmembrane segment spans residues 241-269 (LQRMLIDAAVLGMLGCIDALLTSVVADSL). The Na(+) site is built by D258 and T262. Residues 270-275 (TRTEHN) lie on the Cytoplasmic side of the membrane. A helical membrane pass occupies residues 276-292 (SNKELVGQGIGNVMSGL). The Periplasmic portion of the chain corresponds to 293–302 (FGGLGGAGAT). G300 is a Na(+) binding site. Position 301 (A301) interacts with hydrogencarbonate. T302 is a Na(+) binding site. The helical transmembrane segment at 303–312 (MGTVVNIQSG) threads the bilayer. Residues 313–315 (GRT) are Cytoplasmic-facing. Residues 316-338 (ALSGLIRAMVLLVVILGAAKLAA) traverse the membrane as a helical segment. Residues 339–341 (TIP) lie on the Periplasmic side of the membrane. The helical transmembrane segment at 342–357 (LAVLAGIAFKVGVDII) threads the bilayer. Topologically, residues 358–369 (DWGFLKRAHHVS) are cytoplasmic. The chain crosses the membrane as a helical span at residues 370–390 (IKGALIMYAVIVLTVLVDLIA). Residues 391-392 (AV) are Periplasmic-facing. Residues 393–405 (GIGVFIANILTID) traverse the membrane as a helical segment. At 406-564 (RMSALQSKAV…PSSSSVQTTY (159 aa)) the chain is on the cytoplasmic side. One can recognise an STAS domain in the interval 432-542 (KRWLDEGNGR…DDRSEALKDA (111 aa)).

This sequence belongs to the SLC26A/SulP transporter (TC 2.A.53) family. Forms homodimers through the STAS cytoplasmic domain.

The protein localises to the cell inner membrane. Low affinity, high-flux Na(+)-dependent bicarbonate transporter. Involved in carbone dioxide-concentrating mechanisms (CCMs) that accumulate CO(2) and improve photosynthetic carbon fixation. This chain is Bicarbonate transporter BicA, found in Synechocystis sp. (strain ATCC 27184 / PCC 6803 / Kazusa).